The primary structure comprises 351 residues: Phospho-N-acetylmuramoyl-pentapeptide-transferase (351 aa).

The next 10 membrane-spanning stretches (helical) occupy residues 3 to 23 (GIIA…PPLI), 51 to 71 (TMGG…AHAV), 76 to 96 (PTVS…VGFL), 113 to 133 (GAKM…VTMF), 152 to 172 (FGPP…IVAT), 181 to 201 (GLDG…VIIG), 223 to 243 (PLDL…FLWF), 250 to 270 (IFMG…LAIT), 275 to 295 (LLLL…IIQV), and 329 to 349 (FWII…LEWM).

The protein belongs to the glycosyltransferase 4 family. MraY subfamily. The cofactor is Mg(2+).

It localises to the cell membrane. It catalyses the reaction UDP-N-acetyl-alpha-D-muramoyl-L-alanyl-gamma-D-glutamyl-meso-2,6-diaminopimeloyl-D-alanyl-D-alanine + di-trans,octa-cis-undecaprenyl phosphate = di-trans,octa-cis-undecaprenyl diphospho-N-acetyl-alpha-D-muramoyl-L-alanyl-D-glutamyl-meso-2,6-diaminopimeloyl-D-alanyl-D-alanine + UMP. Its pathway is cell wall biogenesis; peptidoglycan biosynthesis. Its function is as follows. Catalyzes the initial step of the lipid cycle reactions in the biosynthesis of the cell wall peptidoglycan: transfers peptidoglycan precursor phospho-MurNAc-pentapeptide from UDP-MurNAc-pentapeptide onto the lipid carrier undecaprenyl phosphate, yielding undecaprenyl-pyrophosphoryl-MurNAc-pentapeptide, known as lipid I. This Thermobifida fusca (strain YX) protein is Phospho-N-acetylmuramoyl-pentapeptide-transferase.